Here is a 357-residue protein sequence, read N- to C-terminus: DNA replication and repair protein RecF (357 aa).

Gly-30–Thr-37 contributes to the ATP binding site.

This sequence belongs to the RecF family.

It localises to the cytoplasm. The RecF protein is involved in DNA metabolism; it is required for DNA replication and normal SOS inducibility. RecF binds preferentially to single-stranded, linear DNA. It also seems to bind ATP. This chain is DNA replication and repair protein RecF, found in Salmonella paratyphi A (strain ATCC 9150 / SARB42).